A 64-amino-acid chain; its full sequence is Large ribosomal subunit protein bL35 (64 aa).

Disordered stretches follow at residues 1–20 (MPKAKTHSGASKRFRRTGTG) and 37–64 (PTKRTRRLAGRTQVSANDAPRINKMLNG).

This sequence belongs to the bacterial ribosomal protein bL35 family.

This chain is Large ribosomal subunit protein bL35, found in Mycobacterium sp. (strain JLS).